The following is a 303-amino-acid chain: Taste receptor type 2 member 13 (303 aa).

Over 1-7 the chain is Extracellular; sequence MESALPS. A helical transmembrane segment spans residues 8-28; it reads IFTLVIIAEFIIGNLSNGFIV. Topologically, residues 29–55 are cytoplasmic; it reads LINCIDWVSKRELSSVDKLLIILAISR. A helical transmembrane segment spans residues 56 to 76; it reads IGLIWEILVSWFLALHSLAIF. Topologically, residues 77 to 85 are extracellular; that stretch reads VSGTGLRIM. A helical membrane pass occupies residues 86–106; sequence IFSWIVSNHFNLWLATILSIF. Topologically, residues 107–128 are cytoplasmic; it reads YLLKIASFSSPAFLYLKRRVNK. Residues 129-149 form a helical membrane-spanning segment; sequence VILMILLGTLVFLFLNLIQIN. Over 150-184 the chain is Extracellular; the sequence is MLIKDWLDRYERNTTWNFSMSDFETFSVSVRFTMT. N-linked (GlcNAc...) asparagine glycans are attached at residues N162 and N166. The helical transmembrane segment at 185 to 205 threads the bilayer; that stretch reads MFSLTPFTVAFISFLLLVFSL. At 206-232 the chain is on the cytoplasmic side; that stretch reads QKHLQKMQLNYKGHRDPRTKVHTNALK. A helical transmembrane segment spans residues 233-253; it reads IVISFLLLYASFFLSILISWI. The Extracellular segment spans residues 254–261; the sequence is SELYQNTV. Residues 262–282 form a helical membrane-spanning segment; sequence IYMLCETIGAFYPSSHSFLLI. Residues 283 to 303 lie on the Cytoplasmic side of the membrane; sequence LGNAKLRQAFLLVAAKVWAKR.

It belongs to the G-protein coupled receptor T2R family.

The protein localises to the membrane. Receptor that may play a role in the perception of bitterness and is gustducin-linked. May play a role in sensing the chemical composition of the gastrointestinal content. The activity of this receptor may stimulate alpha gustducin, mediate PLC-beta-2 activation and lead to the gating of TRPM5. In Pan troglodytes (Chimpanzee), this protein is Taste receptor type 2 member 13 (TAS2R13).